The sequence spans 354 residues: Peptide chain release factor 1 (354 aa).

Glutamine 231 carries the N5-methylglutamine modification.

The protein belongs to the prokaryotic/mitochondrial release factor family. Methylated by PrmC. Methylation increases the termination efficiency of RF1.

Its subcellular location is the cytoplasm. Peptide chain release factor 1 directs the termination of translation in response to the peptide chain termination codons UAG and UAA. This Acholeplasma laidlawii (strain PG-8A) protein is Peptide chain release factor 1.